Here is a 302-residue protein sequence, read N- to C-terminus: Sulfate adenylyltransferase subunit 2 (302 aa).

This sequence belongs to the PAPS reductase family. CysD subfamily. In terms of assembly, heterodimer composed of CysD, the smaller subunit, and CysN.

The catalysed reaction is sulfate + ATP + H(+) = adenosine 5'-phosphosulfate + diphosphate. The protein operates within sulfur metabolism; hydrogen sulfide biosynthesis; sulfite from sulfate: step 1/3. Its function is as follows. With CysN forms the ATP sulfurylase (ATPS) that catalyzes the adenylation of sulfate producing adenosine 5'-phosphosulfate (APS) and diphosphate, the first enzymatic step in sulfur assimilation pathway. APS synthesis involves the formation of a high-energy phosphoric-sulfuric acid anhydride bond driven by GTP hydrolysis by CysN coupled to ATP hydrolysis by CysD. This chain is Sulfate adenylyltransferase subunit 2, found in Enterobacter sp. (strain 638).